A 303-amino-acid chain; its full sequence is ATP synthase gamma chain (303 aa).

It belongs to the ATPase gamma chain family. In terms of assembly, F-type ATPases have 2 components, CF(1) - the catalytic core - and CF(0) - the membrane proton channel. CF(1) has five subunits: alpha(3), beta(3), gamma(1), delta(1), epsilon(1). CF(0) has three main subunits: a, b and c.

Its subcellular location is the cell inner membrane. Its function is as follows. Produces ATP from ADP in the presence of a proton gradient across the membrane. The gamma chain is believed to be important in regulating ATPase activity and the flow of protons through the CF(0) complex. The polypeptide is ATP synthase gamma chain (Bartonella quintana (strain Toulouse) (Rochalimaea quintana)).